Consider the following 146-residue polypeptide: uncharacterized protein (146 aa).

This is an uncharacterized protein from Aquifex aeolicus (strain VF5).